The primary structure comprises 424 residues: MLDIKFLRTNFEEVKAKLQHRGEDLTDFGRFEELDTRRRELLVQTEELKSKRNEVSQQISVLKREKKDAEALILEMREVGEKVKDLDNELRTVEEDLERLMLSIPNIPHESAPVGETEDDNVVARTWGEVKEFNFEPKPHWDLATDLGILDFERAGKVTGSRFVFYKGAGARLERALISFMLDLHTDEHGYEEVLPPYMVNRASMTGTGQLPKFEEDAFRIESEDYFLIPTAEVPVTNMHRDEILNKEQLPIRYAAFSSCFRSEAGSAGRDTRGLIRQHQFNKVELVKFVKPEDSYEELEKLTNDAERVLQLLELPYRVMSMCTGDLGFTAAKKYDIEVWIPSYGTYREISSCSNFEAFQARRANIRFRREPNGKPEHVHTLNGSGLAIGRTVAAILENYQQEDGTIIIPEVLRPYMGGKTVIK.

231–233 (TAE) lines the L-serine pocket. 262–264 (RSE) is an ATP binding site. Glu285 is a binding site for L-serine. 349 to 352 (EISS) lines the ATP pocket. Residue Ser385 participates in L-serine binding.

The protein belongs to the class-II aminoacyl-tRNA synthetase family. Type-1 seryl-tRNA synthetase subfamily. In terms of assembly, homodimer. The tRNA molecule binds across the dimer.

Its subcellular location is the cytoplasm. The catalysed reaction is tRNA(Ser) + L-serine + ATP = L-seryl-tRNA(Ser) + AMP + diphosphate + H(+). It catalyses the reaction tRNA(Sec) + L-serine + ATP = L-seryl-tRNA(Sec) + AMP + diphosphate + H(+). The protein operates within aminoacyl-tRNA biosynthesis; selenocysteinyl-tRNA(Sec) biosynthesis; L-seryl-tRNA(Sec) from L-serine and tRNA(Sec): step 1/1. Its function is as follows. Catalyzes the attachment of serine to tRNA(Ser). Is also able to aminoacylate tRNA(Sec) with serine, to form the misacylated tRNA L-seryl-tRNA(Sec), which will be further converted into selenocysteinyl-tRNA(Sec). This is Serine--tRNA ligase from Bacillus cereus (strain ZK / E33L).